A 515-amino-acid chain; its full sequence is Fatty acyl-CoA reductase 2 (515 aa).

At 1-464 the chain is on the cytoplasmic side; sequence MSTIAAFYGG…KAKQRLKRLR (464 aa). Residues 465–484 form a helical membrane-spanning segment; sequence NIHYLFNTALFLIAWRLLIA. Over 485–515 the chain is Peroxisomal; the sequence is RSQMARNVWFFIVSFCYKFLSYFRASSTLKV.

The protein belongs to the fatty acyl-CoA reductase family.

The protein resides in the peroxisome membrane. It catalyses the reaction a long-chain fatty acyl-CoA + 2 NADPH + 2 H(+) = a long-chain primary fatty alcohol + 2 NADP(+) + CoA. It carries out the reaction a very long-chain fatty acyl-CoA + 2 NADPH + 2 H(+) = a very long-chain primary fatty alcohol + 2 NADP(+) + CoA. The enzyme catalyses an ultra-long-chain fatty acyl-CoA + 2 NADPH + 2 H(+) = an ultra long-chain primary fatty alcohol + 2 NADP(+) + CoA. The catalysed reaction is hexadecanoyl-CoA + 2 NADPH + 2 H(+) = hexadecan-1-ol + 2 NADP(+) + CoA. It catalyses the reaction octadecanoyl-CoA + 2 NADPH + 2 H(+) = octadecan-1-ol + 2 NADP(+) + CoA. It carries out the reaction eicosanoyl-CoA + 2 NADPH + 2 H(+) = eicosan-1-ol + 2 NADP(+) + CoA. The enzyme catalyses docosanoyl-CoA + 2 NADPH + 2 H(+) = docosan-1-ol + 2 NADP(+) + CoA. The catalysed reaction is tetracosanoyl-CoA + 2 NADPH + 2 H(+) = tetracosan-1-ol + 2 NADP(+) + CoA. It catalyses the reaction hexacosanoyl-CoA + 2 NADPH + 2 H(+) = hexacosan-1-ol + 2 NADP(+) + CoA. It carries out the reaction octacosanoyl-CoA + 2 NADPH + 2 H(+) = octacosan-1-ol + 2 NADP(+) + CoA. The enzyme catalyses triacontanoyl-CoA + 2 NADPH + 2 H(+) = triacontan-1-ol + 2 NADP(+) + CoA. The catalysed reaction is 18-methylnonadecanoyl-CoA + 2 NADPH + 2 H(+) = 18-methylnonadecan-1-ol + 2 NADP(+) + CoA. It catalyses the reaction 20-methylheneicosanoyl-CoA + 2 NADPH + 2 H(+) = 20-methylheneicosan-1-ol + 2 NADP(+) + CoA. It carries out the reaction 22-methyltricosanoyl-CoA + 2 NADPH + 2 H(+) = 22-methyltricosan-1-ol + 2 NADP(+) + CoA. The enzyme catalyses 24-methylpentacosanoyl-CoA + 2 NADPH + 2 H(+) = 24-methylpentacosan-1-ol + 2 NADP(+) + CoA. Functionally, catalyzes the reduction of saturated but not unsaturated C16 or C18 fatty acyl-CoA to fatty alcohols (FAls). A lower activity can be observed with shorter fatty acyl-CoA substrates. Can produce very long-chain and ultra long-chain FAls, regardless of whether they have a straight or branched chain. Involved in the production of ether lipids/plasmalogens and wax monoesters whose synthesis requires FAls as substrates. The sequence is that of Fatty acyl-CoA reductase 2 from Homo sapiens (Human).